A 59-amino-acid chain; its full sequence is Early growth response protein 1 (59 aa).

3 C2H2-type zinc fingers span residues 1-18 (CDRR…IRIH), 24-46 (FQCR…IRTH), and 52-59 (FACDICGR).

Belongs to the EGR C2H2-type zinc-finger protein family.

It is found in the nucleus. Its subcellular location is the cytoplasm. Transcriptional regulator. Recognizes and binds to the DNA sequence 5'-GCG(T/G)GGGCG-3'(EGR-site) in the promoter region of target genes. Binds double-stranded target DNA, irrespective of the cytosine methylation status. Regulates the transcription of numerous target genes, and thereby plays an important role in regulating the response to growth factors, DNA damage, and ischemia. Plays a role in the regulation of cell survival, proliferation and cell death. Mediates responses to ischemia and hypoxia; regulates the expression of proteins that are involved in inflammatory processes. Plays a role in regulating the expression of circadian clock genes. The protein is Early growth response protein 1 (EGR1) of Serinus canaria (Island canary).